The primary structure comprises 329 residues: GMP reductase (329 aa).

The Thioimidate intermediate role is filled by Cys-178. 207 to 230 (VIADGGIRTHGDIAKSIRMGATMV) provides a ligand contact to NADP(+).

This sequence belongs to the IMPDH/GMPR family. GuaC type 2 subfamily.

The enzyme catalyses IMP + NH4(+) + NADP(+) = GMP + NADPH + 2 H(+). Its function is as follows. Catalyzes the irreversible NADPH-dependent deamination of GMP to IMP. It functions in the conversion of nucleobase, nucleoside and nucleotide derivatives of G to A nucleotides, and in maintaining the intracellular balance of A and G nucleotides. This Lactococcus lactis subsp. cremoris (strain SK11) protein is GMP reductase.